The chain runs to 141 residues: Hemoglobin subunit alpha (141 aa).

The region spanning 1–141 (VLSANDKTNV…VSTVLTSKYR (141 aa)) is the Globin domain. Ser3 carries the phosphoserine modification. Lys7 carries the N6-succinyllysine modification. Residue Thr8 is modified to Phosphothreonine. Lys11 is modified (N6-succinyllysine). N6-acetyllysine; alternate is present on Lys16. An N6-succinyllysine; alternate modification is found at Lys16. At Tyr24 the chain carries Phosphotyrosine. Ser35 carries the phosphoserine modification. Residue Lys40 is modified to N6-succinyllysine. A Phosphoserine modification is found at Ser49. Gln58 lines the O2 pocket. His87 is a heme b binding site. Thr108 bears the Phosphothreonine mark. Phosphoserine occurs at positions 124 and 131. Thr134 and Thr137 each carry phosphothreonine. The residue at position 138 (Ser138) is a Phosphoserine.

It belongs to the globin family. In terms of assembly, heterotetramer of two alpha chains and two beta chains. As to expression, red blood cells.

Involved in oxygen transport from the lung to the various peripheral tissues. Functionally, hemopressin acts as an antagonist peptide of the cannabinoid receptor CNR1. Hemopressin-binding efficiently blocks cannabinoid receptor CNR1 and subsequent signaling. In Didelphis virginiana (North American opossum), this protein is Hemoglobin subunit alpha (HBA).